Here is a 612-residue protein sequence, read N- to C-terminus: UvrABC system protein C (612 aa).

A GIY-YIG domain is found at 11 to 90; sequence TASGVYLMKG…IKKYRPRYNI (80 aa). The region spanning 200 to 235 is the UVR domain; sequence SEVVESLQHQMAAAAERMAFEEAARLRDQLRAIEQT.

This sequence belongs to the UvrC family. In terms of assembly, interacts with UvrB in an incision complex.

The protein resides in the cytoplasm. Its function is as follows. The UvrABC repair system catalyzes the recognition and processing of DNA lesions. UvrC both incises the 5' and 3' sides of the lesion. The N-terminal half is responsible for the 3' incision and the C-terminal half is responsible for the 5' incision. The chain is UvrABC system protein C from Syntrophotalea carbinolica (strain DSM 2380 / NBRC 103641 / GraBd1) (Pelobacter carbinolicus).